The sequence spans 344 residues: Methionine import ATP-binding protein MetN 1 (344 aa).

Residues 2 to 241 (IELRNLSQRF…PHHEVTRALI (240 aa)) form the ABC transporter domain. 38 to 45 (GRSGAGKS) contacts ATP.

The protein belongs to the ABC transporter superfamily. Methionine importer (TC 3.A.1.24) family. As to quaternary structure, the complex is composed of two ATP-binding proteins (MetN), two transmembrane proteins (MetI) and a solute-binding protein (MetQ).

It is found in the cell inner membrane. The enzyme catalyses L-methionine(out) + ATP + H2O = L-methionine(in) + ADP + phosphate + H(+). The catalysed reaction is D-methionine(out) + ATP + H2O = D-methionine(in) + ADP + phosphate + H(+). Part of the ABC transporter complex MetNIQ involved in methionine import. Responsible for energy coupling to the transport system. The polypeptide is Methionine import ATP-binding protein MetN 1 (Burkholderia ambifaria (strain ATCC BAA-244 / DSM 16087 / CCUG 44356 / LMG 19182 / AMMD) (Burkholderia cepacia (strain AMMD))).